The primary structure comprises 258 residues: L-aspartate dehydrogenase 1 (258 aa).

NAD(+) contacts are provided by alanine 121 and asparagine 181. Histidine 211 is a catalytic residue.

Belongs to the L-aspartate dehydrogenase family.

It catalyses the reaction L-aspartate + NADP(+) + H2O = oxaloacetate + NH4(+) + NADPH + H(+). The catalysed reaction is L-aspartate + NAD(+) + H2O = oxaloacetate + NH4(+) + NADH + H(+). Its pathway is cofactor biosynthesis; NAD(+) biosynthesis; iminoaspartate from L-aspartate (dehydrogenase route): step 1/1. In terms of biological role, specifically catalyzes the NAD or NADP-dependent dehydrogenation of L-aspartate to iminoaspartate. This is L-aspartate dehydrogenase 1 from Bordetella pertussis (strain Tohama I / ATCC BAA-589 / NCTC 13251).